A 206-amino-acid polypeptide reads, in one-letter code: Dual specificity phosphatase 29 (206 aa).

Positions 47 to 194 constitute a Tyrosine-protein phosphatase domain; sequence HVNQVWPSVY…LRALDITLQE (148 aa). Substrate is bound at residue 138 to 145; the sequence is HCVMGRSR. C139 (phosphocysteine intermediate) is an active-site residue.

The protein belongs to the protein-tyrosine phosphatase family. Non-receptor class dual specificity subfamily.

The protein resides in the cytoplasm. Its subcellular location is the nucleus. The catalysed reaction is O-phospho-L-tyrosyl-[protein] + H2O = L-tyrosyl-[protein] + phosphate. It catalyses the reaction O-phospho-L-seryl-[protein] + H2O = L-seryl-[protein] + phosphate. It carries out the reaction O-phospho-L-threonyl-[protein] + H2O = L-threonyl-[protein] + phosphate. Dual specificity phosphatase able to dephosphorylate phosphotyrosine, phosphoserine and phosphothreonine residues within the same substrate, with a preference for phosphotyrosine as a substrate. Involved in the modulation of AMPK and MAPK1/2 signaling pathways. This Gasterosteus aculeatus (Three-spined stickleback) protein is Dual specificity phosphatase 29 (dusp29).